A 106-amino-acid chain; its full sequence is Large ribosomal subunit protein bL21 (106 aa).

The protein belongs to the bacterial ribosomal protein bL21 family. As to quaternary structure, part of the 50S ribosomal subunit. Contacts protein L20.

Its function is as follows. This protein binds to 23S rRNA in the presence of protein L20. The sequence is that of Large ribosomal subunit protein bL21 from Chlamydia abortus (strain DSM 27085 / S26/3) (Chlamydophila abortus).